The chain runs to 211 residues: MIKLFVGLGNPGPEYEATRHNAGFWWIDALARELKVTLVPERSYHGLVARASVAGHSVWLLQPQTFMNLSGKSVAALARFFKIPPEEILVAHDELDIPPGQAKLKRGGSHAGHNGLRDIHAQLGTSDYWRLRIGIGHPGVKAEVVNWVLKKPAPDQRTLIEDSILHSLKAYPALLAGDMDKATLLVHTTKPPRPKATRPAQAQAAPQAGAD.

Position 15 (Tyr15) interacts with tRNA. The Proton acceptor role is filled by His20. Residues Phe66, Asn68, and Asn114 each contribute to the tRNA site. The tract at residues 189–211 (TKPPRPKATRPAQAQAAPQAGAD) is disordered. A compositionally biased stretch (low complexity) spans 197–211 (TRPAQAQAAPQAGAD).

The protein belongs to the PTH family. As to quaternary structure, monomer.

It localises to the cytoplasm. The enzyme catalyses an N-acyl-L-alpha-aminoacyl-tRNA + H2O = an N-acyl-L-amino acid + a tRNA + H(+). In terms of biological role, hydrolyzes ribosome-free peptidyl-tRNAs (with 1 or more amino acids incorporated), which drop off the ribosome during protein synthesis, or as a result of ribosome stalling. Catalyzes the release of premature peptidyl moieties from peptidyl-tRNA molecules trapped in stalled 50S ribosomal subunits, and thus maintains levels of free tRNAs and 50S ribosomes. This is Peptidyl-tRNA hydrolase from Acidovorax ebreus (strain TPSY) (Diaphorobacter sp. (strain TPSY)).